We begin with the raw amino-acid sequence, 300 residues long: Cholesterol 25-hydroxylase-like protein (300 aa).

N-linked (GlcNAc...) asparagine glycosylation occurs at Asn-9. A run of 3 helical transmembrane segments spans residues 54-73 (YTWV…VPFF), 95-115 (LQGW…LIWV), and 130-152 (MLSQ…HYIN). Positions 135 to 266 (AIFFLAFDFT…WFNYLDRLMG (132 aa)) constitute a Fatty acid hydroxylase domain. The Histidine box-1 signature appears at 148–152 (FHYIN). The Histidine box-2 motif lies at 163–167 (HSVHH). The chain crosses the membrane as a helical span at residues 192 to 212 (ITTIPWIFPTHCLTYWIWFFI). A Histidine box-3 motif is present at residues 242–248 (AHDMHHL).

The protein belongs to the sterol desaturase family. Fe cation serves as cofactor.

The protein localises to the membrane. Its function is as follows. Probable sterol desaturase. This is Cholesterol 25-hydroxylase-like protein from Caenorhabditis elegans.